The following is a 638-amino-acid chain: Threonine--tRNA ligase (638 aa).

Residues 1 to 59 (MEKIKVKIKGKEYEVEKGTPLGKIFELAGIKDALGGVINGKIIDLQTPVRESGEIKPVY) form the TGS domain. A catalytic region spans residues 243–536 (DHRRLGKELE…LLEHYAGLLP (294 aa)). Positions 336, 387, and 513 each coordinate Zn(2+).

Belongs to the class-II aminoacyl-tRNA synthetase family. Homodimer. Zn(2+) serves as cofactor.

Its subcellular location is the cytoplasm. It catalyses the reaction tRNA(Thr) + L-threonine + ATP = L-threonyl-tRNA(Thr) + AMP + diphosphate + H(+). In terms of biological role, catalyzes the attachment of threonine to tRNA(Thr) in a two-step reaction: L-threonine is first activated by ATP to form Thr-AMP and then transferred to the acceptor end of tRNA(Thr). Also edits incorrectly charged L-seryl-tRNA(Thr). The polypeptide is Threonine--tRNA ligase (Aquifex aeolicus (strain VF5)).